Reading from the N-terminus, the 1544-residue chain is Transcriptional activator GLI3 (1544 aa).

2 stretches are compositionally biased toward polar residues: residues 1 to 10 (MEAQSHSSTT) and 402 to 429 (NPVQVSSGPSESTQHNKPTSESAVSSTG). Disordered stretches follow at residues 1–83 (MEAQ…EERA) and 373–477 (SAFG…QEPE). Positions 463-476 (VKEEGDKDESKQEP) are enriched in basic and acidic residues. A C2H2-type 1 zinc finger spans residues 482–509 (TNCHWEGCSREFDTQEQLVHHINNDHIH). The C2H2-type 2; degenerate zinc finger occupies 520 to 542 (LDCSREQKPFKAQYMLVVHMRRH). C2H2-type zinc fingers lie at residues 548 to 572 (HKCTFEGCTKAYSRLENLKTHLRSH), 578 to 603 (YVCEHEGCNKAFSNASDRAKHQNRTH), and 609 to 634 (YVCKIPGCTKRYTDPSSLRKHVKTVH). Disordered regions lie at residues 622 to 728 (DPSS…YSNN), 865 to 919 (RSSG…DLPS), 1126 to 1155 (SVVLGNNNPSSFDRAPPASSQPAGSEVSKS), and 1327 to 1368 (HYQG…GNQS). Residues 634 to 650 (HGPEAHVTKKQRGDIHP) are compositionally biased toward basic and acidic residues. The span at 660 to 685 (SHSQTRSPGQQTQGATGEQKDLNSTT) shows a compositional bias: polar residues. A compositionally biased stretch (basic and acidic residues) spans 686-701 (SRREECLQVKAVKSEK). Over residues 702–728 (PMTSQPSPGGQSTCSSEQSPISNYSNN) the composition is skewed to polar residues. The segment covering 865-882 (RSSGISPCFSSRRSSDAS) has biased composition (low complexity). The segment covering 1330–1355 (GVNQSSPMTLGQVSPTSQSSLHQGPQ) has biased composition (polar residues).

This sequence belongs to the GLI C2H2-type zinc-finger protein family. Post-translationally, phosphorylation is essential for its proteolytic processing. In terms of processing, the repressor form (GLI3R), a C-terminally truncated form is generated from the full-length GLI3 protein (GLI3FL) through proteolytic processing.

The protein localises to the nucleus. It localises to the cytoplasm. Functionally, has a dual function as a transcriptional activator and a repressor of the sonic hedgehog (Shh) pathway, and plays a role in limb development. The full-length GLI3 form (GLI3FL) acts as an activator (GLI3A) while GLI3R, its C-terminally truncated form, acts as a repressor. This Gallus gallus (Chicken) protein is Transcriptional activator GLI3 (GLI3).